Here is a 605-residue protein sequence, read N- to C-terminus: Heparan-sulfate 6-O-sulfotransferase 2 (605 aa).

Residues 1 to 4 (MALP) are Cytoplasmic-facing. Positions 1-66 (MALPACAVRE…GVSHGFHTRP (66 aa)) are disordered. The chain crosses the membrane as a helical; Signal-anchor for type II membrane protein span at residues 5 to 27 (ACAVREFEPPRQPERGAPVRTTC). Residues 9–18 (REFEPPRQPE) show a composition bias toward basic and acidic residues. Topologically, residues 28 to 605 (PRRHSRVEAE…DYIGSVEKWR (578 aa)) are lumenal. The N-linked (GlcNAc...) asparagine glycan is linked to Asn-209. Position 233–241 (233–241 (HIQKTGGTT)) interacts with 3'-phosphoadenylyl sulfate. Substrate contacts are provided by residues 263-264 (KK), Arg-280, Trp-285, and His-290. The Proton acceptor role is filled by His-290. 3'-phosphoadenylyl sulfate is bound by residues Arg-325 and Ser-333. Residues His-337 and Trp-344 each coordinate substrate. Asn-404 carries an N-linked (GlcNAc...) asparagine glycan. 457–459 (TQY) is a 3'-phosphoadenylyl sulfate binding site. Residue Asn-460 is glycosylated (N-linked (GlcNAc...) asparagine). 463-464 (RA) serves as a coordination point for 3'-phosphoadenylyl sulfate. The disordered stretch occupies residues 530–605 (FQSQGQGQSQ…DYIGSVEKWR (76 aa)). Positions 531 to 571 (QSQGQGQSQNPNQNQSQNPNPNANQNLTQNLMQNLTQSLSQ) are enriched in low complexity. 5 N-linked (GlcNAc...) asparagine glycosylation sites follow: Asn-544, Asn-556, Asn-564, Asn-589, and Asn-592. The segment covering 579-597 (KQNSGKEQNDNTSNGTNDY) has biased composition (polar residues).

The protein belongs to the sulfotransferase 6 family.

The protein localises to the membrane. It catalyses the reaction alpha-D-glucosaminyl-[heparan sulfate](n) + 3'-phosphoadenylyl sulfate = 6-sulfo-alpha-D-glucosaminyl-[heparan sulfate](n) + adenosine 3',5'-bisphosphate + H(+). Functionally, 6-O-sulfation enzyme which catalyzes the transfer of sulfate from 3'-phosphoadenosine 5'-phosphosulfate (PAPS) to position 6 of the N-sulfoglucosamine residue (GlcNS) of heparan sulfate. This chain is Heparan-sulfate 6-O-sulfotransferase 2, found in Homo sapiens (Human).